The following is an 860-amino-acid chain: Protein argonaute-3 (860 aa).

At Met1 the chain carries N-acetylmethionine. In terms of domain architecture, PAZ spans 230–349 (PVIQFMCEVL…LPLEVCNIVA (120 aa)). The 302-residue stretch at 518–819 (LIIVILPGKT…VAFRARYHLV (302 aa)) folds into the Piwi domain. The segment at 530-567 (YAEVKRVGDTLLGMATQCVQVKNVIKTSPQTLSNLCLK) is interaction with guide RNA. A divalent metal cation-binding residues include Asp598, Glu638, and Asp670. The interaction with guide RNA stretch occupies residues 758 to 805 (QGTSRPSHYHVLWDDNFFTADELQLLTYQLCHTYVRCTRSVSIPAPAY). His808 contacts a divalent metal cation. Ser825 is subject to Phosphoserine.

This sequence belongs to the argonaute family. Ago subfamily. As to quaternary structure, interacts with EIF4B, IMP8, PRMT5 and TNRC6B. Interacts with APOBEC3F, APOBEC3G and APOBEC3H. Interacts with EDC4. Post-translationally, ubiquitinated on surface-exposed lysines by a SCF-like E3 ubiquitin-protein ligase complex containing ZSWIM8 during target-directed microRNA degradation (TDMD), a process that mediates degradation of microRNAs (miRNAs). Ubiquitination by the SCF-like E3 ubiquitin-protein ligase complex containing ZSWIM8 leads to its subsequent degradation, thereby exposing miRNAs for degradation. ZSWIM8 recognizes and binds AGO3 when it is engaged with a TDMD target.

Its subcellular location is the cytoplasm. It is found in the P-body. It catalyses the reaction Endonucleolytic cleavage to 5'-phosphomonoester.. Its function is as follows. Required for RNA-mediated gene silencing (RNAi). Binds to short RNAs such as microRNAs (miRNAs) and represses the translation of mRNAs which are complementary to them. Proposed to be involved in stabilization of small RNA derivates (siRNA) derived from processed RNA polymerase III-transcribed Alu repeats containing a DR2 retinoic acid response element (RARE) in stem cells and in the subsequent siRNA-dependent degradation of a subset of RNA polymerase II-transcribed coding mRNAs by recruiting a mRNA decapping complex involving EDC4. Possesses RNA slicer activity but only on select RNAs bearing 5'- and 3'-flanking sequences to the region of guide-target complementarity. The polypeptide is Protein argonaute-3 (Ago3) (Mus musculus (Mouse)).